The primary structure comprises 554 residues: Phosphoglucomutase (554 aa).

An alpha-D-glucose 1,6-bisphosphate-binding site is contributed by R21. T111 carries the post-translational modification Phosphothreonine. S113 is an alpha-D-glucose 1,6-bisphosphate binding site. The Phosphoserine intermediate role is filled by S113. Residues S113, D278, D280, and D282 each coordinate Mg(2+). A Phosphoserine modification is found at S113. Residues D282, R283, T346, E365, S367, and K378 each contribute to the alpha-D-glucose 1,6-bisphosphate site.

Belongs to the phosphohexose mutase family. In terms of assembly, monomer. Mg(2+) is required as a cofactor.

The protein localises to the cytoplasm. It is found in the nucleus. It catalyses the reaction alpha-D-glucose 1-phosphate = alpha-D-glucose 6-phosphate. The catalysed reaction is O-phospho-L-seryl-[protein] + alpha-D-glucose 1-phosphate = alpha-D-glucose 1,6-bisphosphate + L-seryl-[protein]. The enzyme catalyses alpha-D-glucose 1,6-bisphosphate + L-seryl-[protein] = O-phospho-L-seryl-[protein] + alpha-D-glucose 6-phosphate. Its function is as follows. Catalyzes the reversible isomerization of alpha-D-glucose 1-phosphate to alpha-D-glucose 6-phosphate. The mechanism proceeds via the intermediate compound alpha-D-glucose 1,6-bisphosphate. Key enzyme in hexose metabolism. The reverse reaction is an essential step for biosynthesis because glucose 1-phosphate is the starting point for the synthesis of UDP-glucose, which acts as a precursor for the synthesis of oligosaccharides and trehalose. The sequence is that of Phosphoglucomutase from Schizosaccharomyces pombe (strain 972 / ATCC 24843) (Fission yeast).